Here is a 443-residue protein sequence, read N- to C-terminus: MVVDKNASGLRMKVDGKWLYLSEELVKKHPGGAVIEQYRNSDATHIFHAFHEGSSQAYKQLDLLKKHGEHDEFLEKQLEKRLDKVDINVSAYDVSVAQEKKMVESFEKLRQKLHDDGLMKANETYFLFKAISTLSIMAFAFYLQYLGWYITSACLLALAWQQFGWLTHEFCHQQPTKNRPLNDTISLFFGNFLQGFSRDWWKDKHNTHHAATNVIDHDGDIDLAPLFAFIPGDLCKYKASFEKAILKIVPYQHLYFTAMLPMLRFSWTGQSVQWVFKENQMEYKVYQRNAFWEQATIVGHWAWVFYQLFLLPTWPLRVAYFIISQMGGGLLIAHVVTFNHNSVDKYPANSRILNNFAALQILTTRNMTPSPFIDWLWGGLNYQIEHHLFPTMPRCNLNACMKYVKEWCKENNLPYLVDDYFDGYAMNLQQLKNMAEHIQAKAA.

Positions 1–71 constitute a Cytochrome b5 heme-binding domain; it reads MVVDKNASGL…DLLKKHGEHD (71 aa). 3 helical membrane-spanning segments follow: residues 136–156, 296–316, and 318–338; these read IMAF…ACLL, TIVG…TWPL, and VAYF…VVTF.

Belongs to the fatty acid desaturase type 1 family.

The protein localises to the membrane. It catalyses the reaction (9Z,12Z)-octadecadienoyl-CoA + 2 Fe(II)-[cytochrome b5] + O2 + 2 H(+) = (6Z,9Z,12Z)-octadecatrienoyl-CoA + 2 Fe(III)-[cytochrome b5] + 2 H2O. It carries out the reaction (9Z,12Z,15Z)-octadecatrienoyl-CoA + 2 Fe(II)-[cytochrome b5] + O2 + 2 H(+) = (6Z,9Z,12Z,15Z)-octadecatetraenoyl-CoA + 2 Fe(III)-[cytochrome b5] + 2 H2O. It participates in lipid metabolism; polyunsaturated fatty acid biosynthesis. Its function is as follows. Can function as a Delta(6) fatty acid desaturase. Introduces a double bond in the fatty acid chain 6 carbons away from carboxy terminal to biosynthesize polyunsaturated fatty acids (PUFAs) endogenously (PUFAs are essential for membrane structure and many cellular and physiological processes). Acts on a variety of substrates such as linoleoyl-CoA ((9Z,12Z)-octadecadienoyl-CoA, C18:2n-6) and alpha-linolenoyl-CoA ((9Z,12Z,15Z)-octadecatrienoyl-CoA, C18:3n-3) to produce gamma-linolenoyl-CoA ((6Z,9Z,12Z)-octadecatrienoyl-CoA, C18:3n-6) and (6Z,9Z,12Z,15Z)-octadecatetraenoyl-CoA (18:4n-3) respectively. Unlike plants, Caenorhabditis elegans desaturases seem to use fatty acyl-CoAs as substrates. Plays a role in synaptic vesicle recycling by regulating synaptojanin unc-26 localization at synapses. This chain is Delta(6)-fatty-acid desaturase fat-3 (fat-3), found in Caenorhabditis elegans.